Here is a 571-residue protein sequence, read N- to C-terminus: Proline--tRNA ligase (571 aa).

The protein belongs to the class-II aminoacyl-tRNA synthetase family. ProS type 1 subfamily. In terms of assembly, homodimer.

It is found in the cytoplasm. The enzyme catalyses tRNA(Pro) + L-proline + ATP = L-prolyl-tRNA(Pro) + AMP + diphosphate. Catalyzes the attachment of proline to tRNA(Pro) in a two-step reaction: proline is first activated by ATP to form Pro-AMP and then transferred to the acceptor end of tRNA(Pro). As ProRS can inadvertently accommodate and process non-cognate amino acids such as alanine and cysteine, to avoid such errors it has two additional distinct editing activities against alanine. One activity is designated as 'pretransfer' editing and involves the tRNA(Pro)-independent hydrolysis of activated Ala-AMP. The other activity is designated 'posttransfer' editing and involves deacylation of mischarged Ala-tRNA(Pro). The misacylated Cys-tRNA(Pro) is not edited by ProRS. In Ectopseudomonas mendocina (strain ymp) (Pseudomonas mendocina), this protein is Proline--tRNA ligase.